A 481-amino-acid chain; its full sequence is uncharacterized protein (481 aa).

Positions 1 to 18 (MSRLPSKTKYHSSHRSLN) are enriched in basic residues. The tract at residues 1–37 (MSRLPSKTKYHSSHRSLNRKTPLLQRSSETNSLRESG) is disordered. Polar residues predominate over residues 24–34 (LQRSSETNSLR). 2 helical membrane passes run 172-191 (SIST…AGAI) and 195-214 (AAAG…YLCW).

Its subcellular location is the membrane. This is an uncharacterized protein from Coxiella burnetii (strain RSA 493 / Nine Mile phase I).